The primary structure comprises 425 residues: Serine--tRNA ligase (425 aa).

231–233 lines the L-serine pocket; the sequence is TAE. An ATP-binding site is contributed by 262–264; sequence RSE. L-serine is bound at residue Glu285. 349–352 serves as a coordination point for ATP; the sequence is EISS. Residue Ser385 participates in L-serine binding.

This sequence belongs to the class-II aminoacyl-tRNA synthetase family. Type-1 seryl-tRNA synthetase subfamily. In terms of assembly, homodimer. The tRNA molecule binds across the dimer.

It localises to the cytoplasm. The enzyme catalyses tRNA(Ser) + L-serine + ATP = L-seryl-tRNA(Ser) + AMP + diphosphate + H(+). It catalyses the reaction tRNA(Sec) + L-serine + ATP = L-seryl-tRNA(Sec) + AMP + diphosphate + H(+). It functions in the pathway aminoacyl-tRNA biosynthesis; selenocysteinyl-tRNA(Sec) biosynthesis; L-seryl-tRNA(Sec) from L-serine and tRNA(Sec): step 1/1. Functionally, catalyzes the attachment of serine to tRNA(Ser). Is also able to aminoacylate tRNA(Sec) with serine, to form the misacylated tRNA L-seryl-tRNA(Sec), which will be further converted into selenocysteinyl-tRNA(Sec). This is Serine--tRNA ligase from Alkaliphilus oremlandii (strain OhILAs) (Clostridium oremlandii (strain OhILAs)).